A 1041-amino-acid polypeptide reads, in one-letter code: Histone deacetylase complex subunit SAP130-B (1041 aa).

5 disordered regions span residues 1-62 (MSSQ…QEPV), 111-131 (KSTM…SAVP), 572-592 (TNQG…EPKS), 614-769 (TPAG…PSGA), and 806-852 (VLAN…DEER). A compositionally biased stretch (polar residues) spans 18-30 (VSNSGASVGQNVQ). A compositionally biased stretch (basic and acidic residues) spans 33–42 (EVAREIDVQS). Residues 576-592 (VQTSSVSSQQASSEPKS) are compositionally biased toward low complexity. A compositionally biased stretch (polar residues) spans 614-641 (TPAGTTVMQSHSQSPGIGSSPAQGSSPR). Over residues 707–728 (PGAADQPSAAASLPSSHHPTAA) the composition is skewed to low complexity.

This sequence belongs to the SAP130 family.

Its subcellular location is the nucleus. Functionally, acts as a transcriptional repressor. This is Histone deacetylase complex subunit SAP130-B (sap130-b) from Xenopus laevis (African clawed frog).